A 482-amino-acid chain; its full sequence is MWRIPVIVALVAGLLYWVRKQGSQPSRKIPQPRIGLPVVGDAHAFGKSPISYIRQATARCGPVFQINLLLTKIVMLRGAQLNRFYLDTREEVWSFGDGMGLFLEKVVVPGYLSHLKEMVSSLNRGVIRSIALEHYTRIAGEEARKIATNWAEKPDIEVFEQMSRYTHRVIVRCLMGQDFYDHHLDELLDLLHRMEADIGHPFHFLLPNWVPHGPARRLHHARDRMAAIFNERLQAREQNPEKWQDSLDYIAYTLKDSRTAHLRQYFAAHHTLLMFAAHTSTVASIAWTVLELLRNPTHLEALKTALATDADIHRSPTLIATLKETSRRYSGVNMIRWARQPHQLPADAAPGKGNIVVPENCIVSISPYLTHHDPETYADPHIWDPTRWLEGGRLSETQKSNRSEVTYFPFGAGCHRCPGEQMAGMIAREMVAHMVKTYDVRWSSTGPPEDFEQLDFSRVGSAWLKGDARVTVKRDKQGMEEA.

Residues 1 to 22 (MWRIPVIVALVAGLLYWVRKQG) form the signal peptide. Residue N401 is glycosylated (N-linked (GlcNAc...) asparagine). A heme-binding site is contributed by C417.

It belongs to the cytochrome P450 family. It depends on heme as a cofactor.

It participates in secondary metabolite biosynthesis. Its function is as follows. Cytochrome P450 monooxygenase; part of the gene cluster that mediates the biosynthesis of pyranonigrins, a family of antioxidative compounds. The first step of pyranonigrins biosynthesis is performed by the hybrid PKS-NRPS synthetase that condenses 6 malonyl-CoA units to an acetyl starter unit, to form a 1,3,5-trioxotetradecane-6,8-dienyl-ACP. The enoyl reductase (ER) domain of pynA is likely to be functional during the first two rounds of polyketide chain extension, to generate the saturated C-C bonds of the alkyl side chain. PynA subsequently forms the amide bond between the acyl chain and L-serine. Although pynA has a terminal reductase domain, it appears to require the thioesterase pynI for the release of the straight-chain intermediate from pynA via the formation of a tetramic acid pyranonigrin J. The methyltransferase pynC then coverts pyranonigrin J to pyranonigrin I via N-methylation. The FAD-dependent monooxygenase pynG catalyzes an epoxidation-mediated cyclization to form the dihydro-gamma-pyrone moiety, followed by pynD-catalyzed oxidation of the alcohol to the ketone and enolization to yield the characteristic tetramic acid-fused gamma-pyrone core of pyranonigrin H. Pyranonigrin H is substrate of pynH for dehydration-mediated exo-methylene formation from the serine side chain to produce pyranonigrin E, before the oxidase pynE reduces the exo-methylene of pyranonigrin E into a pendant methyl to form pyranonigrin G. The FAD-linked oxidoreductase pynB performs the reverse reaction and converts pyranonigrin G back to pyranonigrin E. In Aspergillus niger (strain ATCC MYA-4892 / CBS 513.88 / FGSC A1513), this protein is Cytochrome P450 monooxygenase pynD.